The chain runs to 299 residues: MSRPEQQFKKVLKNPQAQYAVYPTIKVERISTTEHMYFIATKPMFEGGRRNNVFLGHQVGQPVVFKYVSKKEIPGNEVVVMKALQDTPGVIKLIEYTENAMYHILIIEYIPNSIDLLHYHYFKKLEENEAKKIIFQMILIIQNIYEKGFIHGDIKDENLIIDIDQKIIKVIDFGSAVRLNETHPQYNMFGTWEYVCPEFYYYGYYYQLPLTVWTIGMVAVNLFRFRAENFYLNDILKGENYIPDNISETGKQFITDCLTINENKRLSFKGLVSHPWFKGLKKEIQPISELGVDYKNVIT.

The 239-residue stretch at 39-277 (IATKPMFEGG…FKGLVSHPWF (239 aa)) folds into the Protein kinase domain. Residues 45-53 (FEGGRRNNV) and lysine 66 contribute to the ATP site. Aspartate 153 acts as the Proton acceptor in catalysis.

The protein belongs to the protein kinase superfamily. Ser/Thr protein kinase family.

It localises to the virion. Its subcellular location is the host cytoplasm. It catalyses the reaction L-seryl-[protein] + ATP = O-phospho-L-seryl-[protein] + ADP + H(+). The catalysed reaction is L-threonyl-[protein] + ATP = O-phospho-L-threonyl-[protein] + ADP + H(+). Functionally, essential for viral replication. It may mediate the virus progression through DNA replication. This African swine fever virus (isolate Tick/Malawi/Lil 20-1/1983) (ASFV) protein is Serine/threonine-protein kinase 1.